Consider the following 217-residue polypeptide: Ribose-5-phosphate isomerase A (217 aa).

Residues 28–31 (TGST), 81–84 (DGAD), and 94–97 (KGGG) contribute to the substrate site. Glu-103 functions as the Proton acceptor in the catalytic mechanism. Lys-121 provides a ligand contact to substrate.

Belongs to the ribose 5-phosphate isomerase family. As to quaternary structure, homodimer.

The catalysed reaction is aldehydo-D-ribose 5-phosphate = D-ribulose 5-phosphate. The protein operates within carbohydrate degradation; pentose phosphate pathway; D-ribose 5-phosphate from D-ribulose 5-phosphate (non-oxidative stage): step 1/1. In terms of biological role, catalyzes the reversible conversion of ribose-5-phosphate to ribulose 5-phosphate. The polypeptide is Ribose-5-phosphate isomerase A (Aeromonas hydrophila subsp. hydrophila (strain ATCC 7966 / DSM 30187 / BCRC 13018 / CCUG 14551 / JCM 1027 / KCTC 2358 / NCIMB 9240 / NCTC 8049)).